Reading from the N-terminus, the 221-residue chain is MEAFLGALEFQENEYEEFKELYESLKTKQKPHTLFISCVDSRVVPNLITGTQPGELYVIRNMGNVIPPKTSYKESLSTIASVEYAIAHVGVQNLIICGHSDCGACGSIHLIHDETTKAKTPYIANWIQFLEPIKEELKNHPQFSNHFAKRSWLTERLNARLQLNNLLSYDFIQERVINNELKIFGWHYIIETGRIYNYNFESHFFEPIEETIKQRISHENF.

Cys-38, Asp-40, His-99, and Cys-102 together coordinate Zn(2+).

Belongs to the beta-class carbonic anhydrase family. The cofactor is Zn(2+).

The enzyme catalyses hydrogencarbonate + H(+) = CO2 + H2O. In Helicobacter pylori (strain J99 / ATCC 700824) (Campylobacter pylori J99), this protein is Carbonic anhydrase (cynT).